A 144-amino-acid polypeptide reads, in one-letter code: Large ribosomal subunit protein uL16 (144 aa).

The protein belongs to the universal ribosomal protein uL16 family. As to quaternary structure, part of the 50S ribosomal subunit.

Functionally, binds 23S rRNA and is also seen to make contacts with the A and possibly P site tRNAs. This Pediococcus pentosaceus (strain ATCC 25745 / CCUG 21536 / LMG 10740 / 183-1w) protein is Large ribosomal subunit protein uL16.